The chain runs to 1291 residues: Cytoplasmic FMR1-interacting protein (1291 aa).

Positions 1269 to 1291 (HPSVISSSSHYQDPQKLRQSMNN) are disordered. The span at 1271-1291 (SVISSSSHYQDPQKLRQSMNN) shows a compositional bias: polar residues.

This sequence belongs to the CYFIP family. Interacts with Fmr1 and Rac1. Component of the WAVE complex composed of Hem/Kette, Scar/Wave and Cyfip where it binds through its C-terminus directly to Hem.

Its subcellular location is the cytoplasm. Its function is as follows. Plays a role in guidance and morphology of central and peripheral axons and in synaptic morphology. Also required for formation of cell membrane protrusions and for bristle development. This Drosophila pseudoobscura pseudoobscura (Fruit fly) protein is Cytoplasmic FMR1-interacting protein.